We begin with the raw amino-acid sequence, 207 residues long: Probable GTP-binding protein EngB (207 aa).

One can recognise an EngB-type G domain in the interval 22 to 193 (RVPEIVFAGR…LAHFDHYLSG (172 aa)). GTP is bound by residues 30–37 (GRSNVGKS), 57–61 (GKTRL), 75–78 (DIPG), 142–145 (TKDD), and 172–174 (YSS). The Mg(2+) site is built by Ser37 and Thr59.

It belongs to the TRAFAC class TrmE-Era-EngA-EngB-Septin-like GTPase superfamily. EngB GTPase family. Mg(2+) serves as cofactor.

Its function is as follows. Necessary for normal cell division and for the maintenance of normal septation. In Chlorobium luteolum (strain DSM 273 / BCRC 81028 / 2530) (Pelodictyon luteolum), this protein is Probable GTP-binding protein EngB.